The following is a 289-amino-acid chain: uncharacterized protein (289 aa).

One can recognise an HTH tetR-type domain in the interval 2-62 (NEKKERIIKT…SACEYYIGMS (61 aa)). Residues 25-44 (TIQEIASECGISKGAFYLHF) constitute a DNA-binding region (H-T-H motif).

This is an uncharacterized protein from Bacillus subtilis (strain 168).